Reading from the N-terminus, the 639-residue chain is uncharacterized protein (639 aa).

The N-terminal stretch at 1 to 16 (MLTLYLFTATCCFVCA) is a signal peptide. Disordered stretches follow at residues 80–128 (RRRA…SDKL) and 432–488 (QTAT…TSRT). Composition is skewed to polar residues over residues 108–122 (TYAT…TASP) and 432–446 (QTAT…QQQP). Basic and acidic residues predominate over residues 465–480 (HGDEPHSDGELRRESH).

This is an uncharacterized protein from Human cytomegalovirus (strain Merlin) (HHV-5).